A 284-amino-acid chain; its full sequence is ASC1-like protein 3 (284 aa).

Transmembrane regions (helical) follow at residues 9–29 (SSFF…RFFL), 69–89 (LTYY…EPWS), 108–128 (LMLF…ALVA), 148–168 (ILIG…ILAL), 195–215 (FGLF…FWII), and 243–263 (MLLT…LMIM). Positions 60 to 267 (VKFSESIWKL…ICLMIMKQLN (208 aa)) constitute a TLC domain.

It localises to the endoplasmic reticulum membrane. Mediates resistance to sphinganine-analog mycotoxins (SAMs) by restoring the sphingolipid biosynthesis. Could salvage the transport of GPI-anchored proteins from the endoplasmic reticulum to the Golgi apparatus in ceramides-depleted cells after SAM exposure. This Oryza sativa subsp. japonica (Rice) protein is ASC1-like protein 3.